A 531-amino-acid chain; its full sequence is MVDVGKWPIFTLLSPQEIASIRKACVFGTSASEALYVTDNDEVFVFGLNYSNCLGTGDNQSTLVPKKLEGLCGKKIKSLSYGSGPHVLLSTEDGVVYAWGHNGYSQLGNGTTNQGIAPVQVCTNLLIKQVVEVACGSHHSMALAADGEVFAWGYNNCGQVGSGSTANQPTPRKVTNCLHIKRVVGIACGQTSSMAVLDNGEVYGWGYNGNGQLGLGNNGNQLTPVRVAALHSVCVNQIVCGYAHTLALTDEGLLYAWGANTYGQLGTGNKNNLLSPAHIMVEKERVVEIAACHSAHTSAAKTQGGHVYMWGQCRGQSVILPHLTHFSCTDDVFACFATPAVSWRLLSVEHEDFLTVAESLKKEFDSPETADLKFRIDGKYIHVHKAVLKIRCEHFRSMFQSYWNEDMKEVIEIDQFSYPVYRAFLQYLYTDTVDLPPEDAIGLLDLATSYCENRLKKLCQHIIKRGITVENAFSLFSAAVRYDAEDLEEFCFKFCINHLTEVTQTAAFWQMDGPLLKEFIAKASKCGAFKN.

RCC1 repeat units lie at residues 40 to 91 (NDEV…LLST), 93 to 145 (DGVV…ALAA), 147 to 198 (GEVF…AVLD), 199 to 250 (NGEV…ALTD), 252 to 302 (GLLY…AAKT), and 304 to 356 (GGHV…FLTV). 2 consecutive BTB domains span residues 370 to 437 (ADLK…DLPP) and 470 to 499 (ENAF…INHL).

As to expression, ubiquitously expressed. In the retina, present in the nerve fiber layer and to a lesser extent in the inner and outer plexiform layers (at protein level).

Its subcellular location is the nucleus. Functionally, may be involved in cell cycle regulation by chromatin remodeling. The sequence is that of RCC1 and BTB domain-containing protein 1 (RCBTB1) from Homo sapiens (Human).